The primary structure comprises 270 residues: Glutamate racemase (270 aa).

Residues 14-15 (DS) and 46-47 (YG) contribute to the substrate site. Residue Cys77 is the Proton donor/acceptor of the active site. 78-79 (NT) is a binding site for substrate. Cys189 serves as the catalytic Proton donor/acceptor. 190-191 (TH) provides a ligand contact to substrate.

It belongs to the aspartate/glutamate racemases family.

The enzyme catalyses L-glutamate = D-glutamate. It functions in the pathway cell wall biogenesis; peptidoglycan biosynthesis. Its function is as follows. Provides the (R)-glutamate required for cell wall biosynthesis. This is Glutamate racemase from Neisseria gonorrhoeae (strain ATCC 700825 / FA 1090).